The sequence spans 347 residues: Autoinducer 2 import system permease protein LsrC (347 aa).

9 helical membrane-spanning segments follow: residues 14-34 (LLAI…YLSV), 39-59 (MVFS…MVML), 72-92 (GMCA…PVAC), 93-113 (LATL…VAWL), 115-135 (IPAI…MLLW), 155-175 (VFLG…LMAW), 213-233 (LNGG…GFIP), 249-269 (VLGG…ILGA), and 284-304 (IPAW…LVFD).

Belongs to the binding-protein-dependent transport system permease family. AraH/RbsC subfamily. The complex is composed of two ATP-binding proteins (LsrA), two transmembrane proteins (LsrC and LsrD) and a solute-binding protein (LsrB).

Its subcellular location is the cell inner membrane. Functionally, part of the ABC transporter complex LsrABCD involved in autoinducer 2 (AI-2) import. Probably responsible for the translocation of the substrate across the membrane. In Salmonella choleraesuis (strain SC-B67), this protein is Autoinducer 2 import system permease protein LsrC (lsrC).